We begin with the raw amino-acid sequence, 374 residues long: MNYREYQQIVRRKSRQISVGPVKVGGDAPITVQTMTNTPTDDVAATVAQIHRAERAGVDIVRVSCPDEAATAALADIVRQVNVPIVADIHFHYRRAIEAAKAGAACLRINPGNIGSAERVREVVAAARDHGCSIRIGVNAGSLEKHLLEKYGEPNPDALVESALEHAKILQDHDFHEFKISVKASDVFMAVAAYQQLAEVCDHPLHIGITEAGGRRTGTVKSSIGLGSLLWAGIGDTMRVSLSAEPEEEVAVGWDILKSLGIRHRGVRVISCPSCARQGFNVIDTVAQLEDRLAHIEEPITLSIIGCVVNGPGEALMTDLGVTGGGNGRHMVYAAGKTDHTIEGAAMIDHVVELVEQRAARLREEKAAAKQAAE.

Positions 272, 275, 307, and 314 each coordinate [4Fe-4S] cluster.

The protein belongs to the IspG family. Requires [4Fe-4S] cluster as cofactor.

It catalyses the reaction (2E)-4-hydroxy-3-methylbut-2-enyl diphosphate + oxidized [flavodoxin] + H2O + 2 H(+) = 2-C-methyl-D-erythritol 2,4-cyclic diphosphate + reduced [flavodoxin]. It functions in the pathway isoprenoid biosynthesis; isopentenyl diphosphate biosynthesis via DXP pathway; isopentenyl diphosphate from 1-deoxy-D-xylulose 5-phosphate: step 5/6. Converts 2C-methyl-D-erythritol 2,4-cyclodiphosphate (ME-2,4cPP) into 1-hydroxy-2-methyl-2-(E)-butenyl 4-diphosphate. This chain is 4-hydroxy-3-methylbut-2-en-1-yl diphosphate synthase (flavodoxin), found in Acidiphilium cryptum (strain JF-5).